Here is a 60-residue protein sequence, read N- to C-terminus: Cecropin-B (60 aa).

Residues 1–25 (MNFTKLFILVAIAVLVVVGVQPVDG) form the signal peptide. At leucine 59 the chain carries Leucine amide.

Belongs to the cecropin family.

The protein localises to the secreted. In terms of biological role, cecropins have lytic and antibacterial activity against several Gram-positive and Gram-negative bacteria. This chain is Cecropin-B (CecB), found in Anopheles gambiae (African malaria mosquito).